Consider the following 102-residue polypeptide: Keratin-associated protein 25-1 (102 aa).

This sequence belongs to the PMG family. As to quaternary structure, interacts with hair keratins.

In the hair cortex, hair keratin intermediate filaments are embedded in an interfilamentous matrix, consisting of hair keratin-associated proteins (KRTAP), which are essential for the formation of a rigid and resistant hair shaft through their extensive disulfide bond cross-linking with abundant cysteine residues of hair keratins. The matrix proteins include the high-sulfur and high-glycine-tyrosine keratins. The protein is Keratin-associated protein 25-1 (KRTAP25-1) of Homo sapiens (Human).